Reading from the N-terminus, the 307-residue chain is N-acetylmuramic acid 6-phosphate etherase 2 (307 aa).

An SIS domain is found at 62–225 (ITAAFKQGGR…TTASMIRLGK (164 aa)). Residue Glu90 is the Proton donor of the active site. The active site involves Glu121.

This sequence belongs to the GCKR-like family. MurNAc-6-P etherase subfamily. In terms of assembly, homodimer.

It catalyses the reaction N-acetyl-D-muramate 6-phosphate + H2O = N-acetyl-D-glucosamine 6-phosphate + (R)-lactate. It participates in amino-sugar metabolism; 1,6-anhydro-N-acetylmuramate degradation. The protein operates within amino-sugar metabolism; N-acetylmuramate degradation. Its pathway is cell wall biogenesis; peptidoglycan recycling. Functionally, specifically catalyzes the cleavage of the D-lactyl ether substituent of MurNAc 6-phosphate, producing GlcNAc 6-phosphate and D-lactate. Together with AnmK, is also required for the utilization of anhydro-N-acetylmuramic acid (anhMurNAc) either imported from the medium or derived from its own cell wall murein, and thus plays a role in cell wall recycling. This chain is N-acetylmuramic acid 6-phosphate etherase 2, found in Vibrio cholerae serotype O1 (strain ATCC 39315 / El Tor Inaba N16961).